Here is a 71-residue protein sequence, read N- to C-terminus: ATP synthase subunit c 1 (71 aa).

The next 2 helical transmembrane spans lie at 4–24 (FIGA…VGHV) and 46–66 (LFVG…IALL).

It belongs to the ATPase C chain family. As to quaternary structure, F-type ATPases have 2 components, F(1) - the catalytic core - and F(0) - the membrane proton channel. F(1) has five subunits: alpha(3), beta(3), gamma(1), delta(1), epsilon(1). F(0) has four main subunits: a(1), b(1), b'(1) and c(10-14). The alpha and beta chains form an alternating ring which encloses part of the gamma chain. F(1) is attached to F(0) by a central stalk formed by the gamma and epsilon chains, while a peripheral stalk is formed by the delta, b and b' chains.

It is found in the cell inner membrane. Its function is as follows. F(1)F(0) ATP synthase produces ATP from ADP in the presence of a proton or sodium gradient. F-type ATPases consist of two structural domains, F(1) containing the extramembraneous catalytic core and F(0) containing the membrane proton channel, linked together by a central stalk and a peripheral stalk. During catalysis, ATP synthesis in the catalytic domain of F(1) is coupled via a rotary mechanism of the central stalk subunits to proton translocation. Functionally, key component of the F(0) channel; it plays a direct role in translocation across the membrane. A homomeric c-ring of between 10-14 subunits forms the central stalk rotor element with the F(1) delta and epsilon subunits. The protein is ATP synthase subunit c 1 of Cereibacter sphaeroides (strain ATCC 17029 / ATH 2.4.9) (Rhodobacter sphaeroides).